Here is a 473-residue protein sequence, read N- to C-terminus: Probable glycine dehydrogenase (decarboxylating) subunit 2 (473 aa).

A disordered region spans residues 1–40 (MEHYEQARYAPAEGETNEPLLSENDQTTVSVDPSLPDDLT). Lys270 is modified (N6-(pyridoxal phosphate)lysine).

The protein belongs to the GcvP family. C-terminal subunit subfamily. As to quaternary structure, the glycine cleavage system is composed of four proteins: P, T, L and H. In this organism, the P 'protein' is a heterodimer of two subunits. It depends on pyridoxal 5'-phosphate as a cofactor.

It catalyses the reaction N(6)-[(R)-lipoyl]-L-lysyl-[glycine-cleavage complex H protein] + glycine + H(+) = N(6)-[(R)-S(8)-aminomethyldihydrolipoyl]-L-lysyl-[glycine-cleavage complex H protein] + CO2. The glycine cleavage system catalyzes the degradation of glycine. The P protein binds the alpha-amino group of glycine through its pyridoxal phosphate cofactor; CO(2) is released and the remaining methylamine moiety is then transferred to the lipoamide cofactor of the H protein. The protein is Probable glycine dehydrogenase (decarboxylating) subunit 2 of Halobacterium salinarum (strain ATCC 700922 / JCM 11081 / NRC-1) (Halobacterium halobium).